Here is a 220-residue protein sequence, read N- to C-terminus: Large ribosomal subunit protein bL21c (220 aa).

The protein belongs to the bacterial ribosomal protein bL21 family. As to quaternary structure, part of the 50S ribosomal subunit.

The protein resides in the plastid. The protein localises to the chloroplast. Functionally, this protein binds to 23S ribosomal RNA in the presence of protein L20. This Arabidopsis thaliana (Mouse-ear cress) protein is Large ribosomal subunit protein bL21c (RPL21).